The chain runs to 271 residues: Repressed by EFG1 protein 1 (271 aa).

Residues Met1–Ala19 form the signal peptide. Positions Gln59 to Thr118 are disordered. A compositionally biased stretch (low complexity) spans Ser67 to Thr118. The SCP domain occupies Leu128 to Tyr244. Asn254 is a glycosylation site (N-linked (GlcNAc...) asparagine).

It belongs to the CRISP family.

Its subcellular location is the secreted. It is found in the cell wall. In terms of biological role, cell wall protein involved in cell wall integrity and which plays a role in virulence. This chain is Repressed by EFG1 protein 1 (RBE1), found in Candida albicans (strain SC5314 / ATCC MYA-2876) (Yeast).